We begin with the raw amino-acid sequence, 136 residues long: Small ribosomal subunit protein uS9 (136 aa).

A disordered region spans residues 97–136 (SPDNRKPLKTEGHLSRDPRAKERRKYGLKKARKAPQFSKR). Residues 98-116 (PDNRKPLKTEGHLSRDPRA) are compositionally biased toward basic and acidic residues. The segment covering 117 to 136 (KERRKYGLKKARKAPQFSKR) has biased composition (basic residues).

This sequence belongs to the universal ribosomal protein uS9 family.

This is Small ribosomal subunit protein uS9 from Prochlorococcus marinus (strain MIT 9312).